The sequence spans 438 residues: Protein SPMIP7 (438 aa).

Testis-specific.

Functionally, essential for normal spermatogenesis. The sequence is that of Protein SPMIP7 from Homo sapiens (Human).